We begin with the raw amino-acid sequence, 297 residues long: Protease HtpX homolog (297 aa).

Helical transmembrane passes span 14–34 and 39–59; these read VILL…AGYL and YQLG…SMIF. Histidine 143 is a Zn(2+) binding site. Glutamate 144 is an active-site residue. Residue histidine 147 coordinates Zn(2+). A run of 2 helical transmembrane segments spans residues 158–178 and 193–213; these read IAVA…RMMW and GFGA…PLAA. Glutamate 225 is a binding site for Zn(2+).

The protein belongs to the peptidase M48B family. The cofactor is Zn(2+).

It localises to the cell membrane. The sequence is that of Protease HtpX homolog from Streptococcus equi subsp. equi (strain 4047).